The sequence spans 171 residues: MTKQHAFTREDLLRCSRGELFGPGNAQLPAPNMLMVDRITHISEEGGKYGKGELVAELDITPDLWFFACHFEGDPVMPGCLGLDAMWQLVGFFLGWQGLPGRGRALGSGEVKFFGQVLPSAKKVTYNIHIKRVLKGKLNMAIADGSVSVDGREIYTAEGLRVGVFTSTDNF.

Residue histidine 70 is part of the active site.

It belongs to the thioester dehydratase family. FabA subfamily. Homodimer.

It is found in the cytoplasm. The catalysed reaction is a (3R)-hydroxyacyl-[ACP] = a (2E)-enoyl-[ACP] + H2O. It catalyses the reaction (3R)-hydroxydecanoyl-[ACP] = (2E)-decenoyl-[ACP] + H2O. It carries out the reaction (2E)-decenoyl-[ACP] = (3Z)-decenoyl-[ACP]. Its pathway is lipid metabolism; fatty acid biosynthesis. Necessary for the introduction of cis unsaturation into fatty acids. Catalyzes the dehydration of (3R)-3-hydroxydecanoyl-ACP to E-(2)-decenoyl-ACP and then its isomerization to Z-(3)-decenoyl-ACP. Can catalyze the dehydratase reaction for beta-hydroxyacyl-ACPs with saturated chain lengths up to 16:0, being most active on intermediate chain length. The polypeptide is 3-hydroxydecanoyl-[acyl-carrier-protein] dehydratase (Pseudomonas putida (strain GB-1)).